A 707-amino-acid chain; its full sequence is Choline transporter-like protein 4 (707 aa).

At 1-27 the chain is on the cytoplasmic side; it reads MASEEYGEPAKHDPSFKGPIKKRGCTD. The chain crosses the membrane as a helical span at residues 28 to 48; sequence IICCVLFMVFLLGYMVVGILA. At 49 to 225 the chain is on the extracellular side; it reads WLYGDPRQVI…KIFEDFAKSW (177 aa). 5 N-linked (GlcNAc...) asparagine glycosylation sites follow: Asn62, Asn140, Asn176, Asn191, and Asn196. The chain crosses the membrane as a helical span at residues 226–246; that stretch reads PWIITALVIAMVVSLLFLILL. Over 247–249 the chain is Cytoplasmic; the sequence is RFT. Residues 250-270 form a helical membrane-spanning segment; it reads AGILVWVLIVGVIGVIGYGIY. At 271–305 the chain is on the extracellular side; the sequence is HCYMEYDTLNKQGVSVSDVGFTFNLGVYFRVKETW. The chain crosses the membrane as a helical span at residues 306–326; it reads LAILIVLAVVEAILLLVLLFL. Over 327–354 the chain is Cytoplasmic; it reads RKRILIAIALIKEASKAIGHIMSSLFYP. Residues 355 to 375 form a helical membrane-spanning segment; the sequence is LVTFVLLVVCVAYWGMTALYL. The Extracellular segment spans residues 376–442; sequence ATSGAPIYRI…TNLFNLQIYN (67 aa). Residues Asn389, Asn397, and Asn401 are each glycosylated (N-linked (GlcNAc...) asparagine). The helical transmembrane segment at 443 to 463 threads the bilayer; the sequence is VIGFLWCINFVIALGQCVLAG. Topologically, residues 464–494 are cytoplasmic; that stretch reads AFASYYWAFHKPKDIPFFPVAESFMRTLRYH. The chain crosses the membrane as a helical span at residues 495 to 515; the sequence is TGSLAFGSLILTIVQLIRIIL. Topologically, residues 516–556 are extracellular; it reads EYVDHKLKGAQNPCTRFLLCCLKCCFWCLEKFIKFLNRNAY. The chain crosses the membrane as a helical span at residues 557–577; that stretch reads IMIAVYGKNFCVSAKNAFKLL. The Cytoplasmic portion of the chain corresponds to 578-593; it reads MRNIVRVVVLDKVTDL. The helical transmembrane segment at 594–614 threads the bilayer; that stretch reads LIFFGKLIVVGGVGVLAFFFF. The Extracellular portion of the chain corresponds to 615–633; that stretch reads SGRIPIPNDSFKSPTLNYY. Asn622 carries an N-linked (GlcNAc...) asparagine glycan. The chain crosses the membrane as a helical span at residues 634-654; it reads WIPIITVVLGSYMIAHGFFSV. The Cytoplasmic segment spans residues 655-707; sequence YNMCVDTLFLCFLEDLERNDGSQEKPYYMSKSLMSILNKKNRPPKSEEKKKKK.

This sequence belongs to the CTL (choline transporter-like) family.

It is found in the membrane. It localises to the apical cell membrane. The enzyme catalyses choline(out) + n H(+)(in) = choline(in) + n H(+)(out). The catalysed reaction is thiamine diphosphate(out) = thiamine diphosphate(in). Functionally, choline transporter that seems to play a role in the choline-acetylcholine system and is required to the efferent innervation of hair cells in the olivocochlear bundle for the maintenance of physiological function of outer hair cells and the protection of hair cells from acoustic injury. Also described as a thiamine pyrophosphate transporter. In terms of biological role, also described as a thiamine pyrophosphate transporter. The polypeptide is Choline transporter-like protein 4 (slc44a4) (Xenopus laevis (African clawed frog)).